We begin with the raw amino-acid sequence, 129 residues long: Small ribosomal subunit protein uS11 (129 aa).

The protein belongs to the universal ribosomal protein uS11 family. As to quaternary structure, part of the 30S ribosomal subunit. Interacts with proteins S7 and S18. Binds to IF-3.

Functionally, located on the platform of the 30S subunit, it bridges several disparate RNA helices of the 16S rRNA. Forms part of the Shine-Dalgarno cleft in the 70S ribosome. The sequence is that of Small ribosomal subunit protein uS11 from Erwinia tasmaniensis (strain DSM 17950 / CFBP 7177 / CIP 109463 / NCPPB 4357 / Et1/99).